The chain runs to 95 residues: Large ribosomal subunit protein bL21 (95 aa).

This sequence belongs to the bacterial ribosomal protein bL21 family. In terms of assembly, part of the 50S ribosomal subunit. Contacts protein L20.

Functionally, this protein binds to 23S rRNA in the presence of protein L20. The sequence is that of Large ribosomal subunit protein bL21 from Rubrobacter xylanophilus (strain DSM 9941 / JCM 11954 / NBRC 16129 / PRD-1).